A 172-amino-acid polypeptide reads, in one-letter code: NADH-quinone oxidoreductase subunit B 1 (172 aa).

The [4Fe-4S] cluster site is built by C42, C43, C107, and C137.

The protein belongs to the complex I 20 kDa subunit family. As to quaternary structure, NDH-1 is composed of 14 different subunits. Subunits NuoB, C, D, E, F, and G constitute the peripheral sector of the complex. It depends on [4Fe-4S] cluster as a cofactor.

The protein localises to the cell inner membrane. The enzyme catalyses a quinone + NADH + 5 H(+)(in) = a quinol + NAD(+) + 4 H(+)(out). Its function is as follows. NDH-1 shuttles electrons from NADH, via FMN and iron-sulfur (Fe-S) centers, to quinones in the respiratory chain. Couples the redox reaction to proton translocation (for every two electrons transferred, four hydrogen ions are translocated across the cytoplasmic membrane), and thus conserves the redox energy in a proton gradient. The polypeptide is NADH-quinone oxidoreductase subunit B 1 (Anaeromyxobacter sp. (strain Fw109-5)).